The chain runs to 338 residues: CRISPR-associated endonuclease Cas1 (338 aa).

Mn(2+) contacts are provided by E165, H230, and E245.

The protein belongs to the CRISPR-associated endonuclease Cas1 family. As to quaternary structure, homodimer, forms a heterotetramer with a Cas2 homodimer. It depends on Mg(2+) as a cofactor. Requires Mn(2+) as cofactor.

In terms of biological role, CRISPR (clustered regularly interspaced short palindromic repeat), is an adaptive immune system that provides protection against mobile genetic elements (viruses, transposable elements and conjugative plasmids). CRISPR clusters contain spacers, sequences complementary to antecedent mobile elements, and target invading nucleic acids. CRISPR clusters are transcribed and processed into CRISPR RNA (crRNA). Acts as a dsDNA endonuclease. Involved in the integration of spacer DNA into the CRISPR cassette. This is CRISPR-associated endonuclease Cas1 from Fusobacterium nucleatum subsp. nucleatum (strain ATCC 25586 / DSM 15643 / BCRC 10681 / CIP 101130 / JCM 8532 / KCTC 2640 / LMG 13131 / VPI 4355).